The primary structure comprises 288 residues: MEKYHGLEKIGEGTYGVVYKAQNNYGETFALKKIRLEKEDEGIPSTTIREISILKELKHSNIVKLYDVIHTKKRLVLVFEHLDQDLKKLLDVCEGGLESVTAKSFLLQLLNGIAYCHDRRVLHRDLKPQNLLINREGELKIADFGLARAFGIPVRKYTHEVVTLWYRAPDVLMGSKKYSTTIDIWSVGCIFAEMVNGTPLFPGVSEADQLMRIFRILGTPNSKNWPNVTELPKYDPNFTVYEPLPWESFLKGLDESGIDLLSKMLKLDPNQRITAKQALEHAYFKENN.

One can recognise a Protein kinase domain in the interval 4–284; the sequence is YHGLEKIGEG…AKQALEHAYF (281 aa). ATP-binding positions include 10-18 and Lys32; that span reads IGEGTYGVV. Residue Thr14 is modified to Phosphothreonine. Position 15 is a phosphotyrosine (Tyr15). Residue Asp125 is the Proton acceptor of the active site. The residue at position 158 (Thr158) is a Phosphothreonine.

This sequence belongs to the protein kinase superfamily. CMGC Ser/Thr protein kinase family. CDC2/CDKX subfamily. As to quaternary structure, may form a complex composed of at least the catalytic subunit CRK2 and a cyclin. It depends on Mg(2+) as a cofactor. In terms of processing, autophosphorylates in presence of cyclin cyc-1 but not in presence of cyclin cyc-3.

Its subcellular location is the cytoplasm. The enzyme catalyses L-seryl-[protein] + ATP = O-phospho-L-seryl-[protein] + ADP + H(+). It catalyses the reaction L-threonyl-[protein] + ATP = O-phospho-L-threonyl-[protein] + ADP + H(+). It carries out the reaction [DNA-directed RNA polymerase] + ATP = phospho-[DNA-directed RNA polymerase] + ADP + H(+). With respect to regulation, phosphorylation at Thr-14 or Tyr-15 inactivates the enzyme, while phosphorylation at Thr-158 activates it. Activated by cyclin cyc-1 in vitro. Activated by cyclin cyc-3 in vitro. Functionally, serine/threonine-protein kinase. Involved in the control of the cell cycle. Required for entry into S-phase and mitosis. Probable component of the kinase complex that phosphorylates the repetitive C-terminus of RNA polymerase II. In schizonts, phosphorylates ORC1 resulting in its dissociation from DNA, relocalization to the cytoplasm and likely its degradation. The chain is Cyclin-dependent kinase 2 homolog from Plasmodium falciparum (isolate 3D7).